The chain runs to 213 residues: StAR-related lipid transfer protein 5 (213 aa).

Residues 1-213 (MDLATAAQVS…LEKAVKKFFG (213 aa)) enclose the START domain.

In terms of biological role, may be involved in the intracellular transport of sterols or other lipids. May bind cholesterol or other sterols. The sequence is that of StAR-related lipid transfer protein 5 (STARD5) from Bos taurus (Bovine).